The sequence spans 411 residues: Dihydrofolate synthase/folylpolyglutamate synthase (411 aa).

Position 53–56 (53–56 (GKGT)) interacts with ATP. Ser-77 provides a ligand contact to Mg(2+). 7,8-dihydropteroate contacts are provided by residues 116 to 119 (TYFE) and 147 to 149 (LDA). Residue His-167 participates in Mg(2+) binding. Arg-283 and Asp-296 together coordinate ATP.

It belongs to the folylpolyglutamate synthase family. Monomer. The cofactor is Mg(2+).

It carries out the reaction 7,8-dihydropteroate + L-glutamate + ATP = 7,8-dihydrofolate + ADP + phosphate + H(+). The catalysed reaction is (6S)-5,6,7,8-tetrahydrofolyl-(gamma-L-Glu)(n) + L-glutamate + ATP = (6S)-5,6,7,8-tetrahydrofolyl-(gamma-L-Glu)(n+1) + ADP + phosphate + H(+). The enzyme catalyses 10-formyltetrahydrofolyl-(gamma-L-Glu)(n) + L-glutamate + ATP = 10-formyltetrahydrofolyl-(gamma-L-Glu)(n+1) + ADP + phosphate + H(+). It catalyses the reaction (6R)-5,10-methylenetetrahydrofolyl-(gamma-L-Glu)(n) + L-glutamate + ATP = (6R)-5,10-methylenetetrahydrofolyl-(gamma-L-Glu)(n+1) + ADP + phosphate + H(+). It functions in the pathway cofactor biosynthesis; tetrahydrofolate biosynthesis; 7,8-dihydrofolate from 2-amino-4-hydroxy-6-hydroxymethyl-7,8-dihydropteridine diphosphate and 4-aminobenzoate: step 2/2. It participates in cofactor biosynthesis; tetrahydrofolylpolyglutamate biosynthesis. Its function is as follows. Functions in two distinct reactions of the de novo folate biosynthetic pathway. Catalyzes the addition of a glutamate residue to dihydropteroate (7,8-dihydropteroate or H2Pte) to form dihydrofolate (7,8-dihydrofolate monoglutamate or H2Pte-Glu). Also catalyzes successive additions of L-glutamate to tetrahydrofolate or 10-formyltetrahydrofolate or 5,10-methylenetetrahydrofolate, leading to folylpolyglutamate derivatives. The chain is Dihydrofolate synthase/folylpolyglutamate synthase (folC) from Buchnera aphidicola subsp. Acyrthosiphon pisum (strain APS) (Acyrthosiphon pisum symbiotic bacterium).